Here is a 311-residue protein sequence, read N- to C-terminus: Probable flavin reductase (311 aa).

FMN contacts are provided by residues 38 to 41 (TANS), 55 to 61 (CLAKSSR), 88 to 89 (FA), and Arg-95.

The protein belongs to the non-flavoprotein flavin reductase family.

The chain is Probable flavin reductase from Rhizobium meliloti (strain 1021) (Ensifer meliloti).